Consider the following 220-residue polypeptide: Fructose-6-phosphate aldolase (220 aa).

Lys-85 (schiff-base intermediate with substrate) is an active-site residue.

This sequence belongs to the transaldolase family. Type 3A subfamily. Homodecamer.

The protein resides in the cytoplasm. It carries out the reaction beta-D-fructose 6-phosphate = dihydroxyacetone + D-glyceraldehyde 3-phosphate. Functionally, catalyzes the reversible formation of fructose 6-phosphate from dihydroxyacetone and D-glyceraldehyde 3-phosphate via an aldolization reaction. This Salmonella typhi protein is Fructose-6-phosphate aldolase.